Here is a 340-residue protein sequence, read N- to C-terminus: UDP-3-O-acylglucosamine N-acyltransferase (340 aa).

Catalysis depends on His238, which acts as the Proton acceptor.

This sequence belongs to the transferase hexapeptide repeat family. LpxD subfamily. In terms of assembly, homotrimer.

The enzyme catalyses a UDP-3-O-[(3R)-3-hydroxyacyl]-alpha-D-glucosamine + a (3R)-hydroxyacyl-[ACP] = a UDP-2-N,3-O-bis[(3R)-3-hydroxyacyl]-alpha-D-glucosamine + holo-[ACP] + H(+). The protein operates within bacterial outer membrane biogenesis; LPS lipid A biosynthesis. Its function is as follows. Catalyzes the N-acylation of UDP-3-O-acylglucosamine using 3-hydroxyacyl-ACP as the acyl donor. Is involved in the biosynthesis of lipid A, a phosphorylated glycolipid that anchors the lipopolysaccharide to the outer membrane of the cell. This is UDP-3-O-acylglucosamine N-acyltransferase from Psychromonas ingrahamii (strain DSM 17664 / CCUG 51855 / 37).